The sequence spans 865 residues: Centrosomal protein of 97 kDa (865 aa).

LRR repeat units lie at residues 37–58 (DIHT…EKCK), 59–80 (RLIQ…AKLT), 81–102 (LLRV…KELV), 103–124 (HLEW…NSCT), 125–146 (ALQH…SKLV), 147–168 (SLKT…PAYL), 171–192 (SLAI…SFLA), and 196–205 (ELEQLSIMNN). Residues 211–249 (TPSIPGFDYRPYIVSWCLNLRVLDGYVISQKESLKAEWL) enclose the LRRCT domain. Residues 300–750 (HQRQLMNQSQ…RYGKESDLGD (451 aa)) form a CCP110-binding region. Phosphoserine is present on residues Ser308, Ser413, and Ser500. The disordered stretch occupies residues 506 to 529 (ESTEQKQSDIKKPENTQPENKETI). Basic and acidic residues predominate over residues 508 to 527 (TEQKQSDIKKPENTQPENKE). Ser530 is subject to Phosphoserine. Thr542 bears the Phosphothreonine mark. The 30-residue stretch at 558–587 (LNDAATKLQACWRGFYARNYNPQAKDVRYE) folds into the IQ domain. Residues 587–865 (EIRLRRMQEH…FQLLHVGVTV (279 aa)) are interaction with MPHOSPH9. The segment at 715-769 (QHSLDFEKSSTEGSESSIMGNSIDTVRYGKESDLGDVSEEHGEWNKESSNNEQDN) is disordered. Positions 725–738 (TEGSESSIMGNSID) are enriched in polar residues. Over residues 741 to 760 (RYGKESDLGDVSEEHGEWNK) the composition is skewed to basic and acidic residues. A Phosphoserine modification is found at Ser763.

In terms of assembly, interacts with CALM1, CEP76, KIF24 and TALPID3. Interacts with CCP110. ENKD1 competes with CEP97 for binding to CCP110, destabilizing the interaction between CP110 and CEP97 which promotes the removal of CCP110 and CEP97 from the mother centriole and allows the initiation of ciliogenesis. Via its interaction with CCP110, may indirectly interact with HERC2 and NEURL4. Interacts with MPHOSPH9.

Its subcellular location is the cytoplasm. The protein resides in the cytoskeleton. It is found in the microtubule organizing center. It localises to the centrosome. The protein localises to the centriole. Its function is as follows. Acts as a key negative regulator of ciliogenesis in collaboration with CCP110 by capping the mother centriole thereby preventing cilia formation. Required for recruitment of CCP110 to the centrosome. This Homo sapiens (Human) protein is Centrosomal protein of 97 kDa (CEP97).